Here is a 483-residue protein sequence, read N- to C-terminus: Probable glycosyltransferase 6 (483 aa).

The Cytoplasmic portion of the chain corresponds to methionine 1 to alanine 40. The helical; Signal-anchor for type II membrane protein transmembrane segment at leucine 41–leucine 61 threads the bilayer. Topologically, residues serine 62–arginine 483 are lumenal. Asparagine 144 is a glycosylation site (N-linked (GlcNAc...) asparagine).

This sequence belongs to the glycosyltransferase 34 family.

The protein localises to the golgi apparatus membrane. Probable glycosyltransferase that may be involved in the biosynthesis of xyloglucan. This Oryza sativa subsp. japonica (Rice) protein is Probable glycosyltransferase 6.